A 537-amino-acid chain; its full sequence is Probable sterol O-acyltransferase 1 (537 aa).

A run of 4 helical transmembrane segments spans residues 98 to 118 (FRGF…QLYA), 140 to 160 (FFVL…SYGL), 174 to 194 (LGYT…VYWV), and 199 to 219 (FPIV…MKQF). N-linked (GlcNAc...) asparagine glycosylation occurs at asparagine 250. 2 helical membrane passes run 344-364 (FGLL…SAVA) and 384-404 (IMFP…DCIL). The short motif at 418–424 (FYGAWWN) is the FYXDWWN motif element. The next 2 membrane-spanning stretches (helical) occupy residues 462–482 (AVLL…LLAT) and 517–537 (VFFW…YIVF). The active site involves histidine 474.

The protein belongs to the membrane-bound acyltransferase family. Sterol o-acyltransferase subfamily.

It localises to the endoplasmic reticulum membrane. In terms of biological role, sterol O-acyltransferase that catalyzes the formation of stery esters. The polypeptide is Probable sterol O-acyltransferase 1 (are1) (Schizosaccharomyces pombe (strain 972 / ATCC 24843) (Fission yeast)).